Consider the following 138-residue polypeptide: Transcription antitermination protein NusB (138 aa).

This sequence belongs to the NusB family.

Its function is as follows. Involved in transcription antitermination. Required for transcription of ribosomal RNA (rRNA) genes. Binds specifically to the boxA antiterminator sequence of the ribosomal RNA (rrn) operons. The protein is Transcription antitermination protein NusB of Helicobacter pylori (strain Shi470).